A 211-amino-acid chain; its full sequence is Bcl-2-related ovarian killer protein homolog B (211 aa).

The BH4 signature appears at 32-44 (KELCRDFIHSRIT). The BH3 motif lies at 67–83 (VSVVLLKLGDELECMRP). The BH1 signature appears at 113-132 (EVIAMGITWGKVVAIYAVAA). The short motif at 165–179 (WLKKRGGWVDILKCV) is the BH2 element. Residues 190–210 (WLSTAVLTWREFIKTMYVYLT) traverse the membrane as a helical segment.

This sequence belongs to the Bcl-2 family. In terms of tissue distribution, expressed strongly in ovary and more weakly in eye. Little expression in other tissues examined.

The protein resides in the membrane. Functionally, may play a role in apoptosis. Does not appear to show pro-apoptotic activity when expressed ectopically in early embryos. This chain is Bcl-2-related ovarian killer protein homolog B (bokb), found in Danio rerio (Zebrafish).